The sequence spans 401 residues: Probable tRNA sulfurtransferase (401 aa).

The THUMP domain occupies 63 to 168 (TTAEQALSYL…EREAFLYGAR (106 aa)). ATP contacts are provided by residues 186-187 (LL), 211-212 (YF), Arg-268, Gly-290, and Gln-299.

This sequence belongs to the ThiI family.

The protein localises to the cytoplasm. The catalysed reaction is [ThiI sulfur-carrier protein]-S-sulfanyl-L-cysteine + a uridine in tRNA + 2 reduced [2Fe-2S]-[ferredoxin] + ATP + H(+) = [ThiI sulfur-carrier protein]-L-cysteine + a 4-thiouridine in tRNA + 2 oxidized [2Fe-2S]-[ferredoxin] + AMP + diphosphate. The enzyme catalyses [ThiS sulfur-carrier protein]-C-terminal Gly-Gly-AMP + S-sulfanyl-L-cysteinyl-[cysteine desulfurase] + AH2 = [ThiS sulfur-carrier protein]-C-terminal-Gly-aminoethanethioate + L-cysteinyl-[cysteine desulfurase] + A + AMP + 2 H(+). The protein operates within cofactor biosynthesis; thiamine diphosphate biosynthesis. Catalyzes the ATP-dependent transfer of a sulfur to tRNA to produce 4-thiouridine in position 8 of tRNAs, which functions as a near-UV photosensor. Also catalyzes the transfer of sulfur to the sulfur carrier protein ThiS, forming ThiS-thiocarboxylate. This is a step in the synthesis of thiazole, in the thiamine biosynthesis pathway. The sulfur is donated as persulfide by IscS. The chain is Probable tRNA sulfurtransferase from Treponema pallidum (strain Nichols).